The chain runs to 211 residues: Redox-sensing transcriptional repressor Rex (211 aa).

Positions 17-56 form a DNA-binding region, H-T-H motif; it reads LYYRFIQNFAQEGMERISSKELSEAMKIDSATIRRDFSYF. 91 to 96 is a binding site for NAD(+); it reads GVGNLG.

This sequence belongs to the transcriptional regulatory Rex family. Homodimer.

It localises to the cytoplasm. Modulates transcription in response to changes in cellular NADH/NAD(+) redox state. This Lysinibacillus sphaericus (strain C3-41) protein is Redox-sensing transcriptional repressor Rex.